Reading from the N-terminus, the 534-residue chain is Multicopper oxidase LPR1 homolog 3 (534 aa).

Cu cation contacts are provided by histidine 84 and histidine 86. Asparagine 109 carries N-linked (GlcNAc...) asparagine glycosylation. Cu cation-binding residues include histidine 133 and histidine 135. The 73-residue stretch at 219–291 (PFQAVQRRRY…VDFSLVVNPN (73 aa)) folds into the Plastocyanin-like domain. 6 N-linked (GlcNAc...) asparagine glycosylation sites follow: asparagine 234, asparagine 291, asparagine 312, asparagine 323, asparagine 341, and asparagine 372. Positions 419, 422, and 424 each coordinate Cu cation. Asparagine 450 is a glycosylation site (N-linked (GlcNAc...) asparagine). The Cu cation site is built by histidine 515, cysteine 516, histidine 517, histidine 521, and methionine 526.

The protein belongs to the multicopper oxidase family. It depends on Cu cation as a cofactor. As to expression, expressed in roots and basal stems.

The protein resides in the endoplasmic reticulum membrane. In terms of biological role, multicopper oxidase that may play a role in the maintenance of inorganic phosphate homeostasis. The sequence is that of Multicopper oxidase LPR1 homolog 3 from Oryza sativa subsp. japonica (Rice).